We begin with the raw amino-acid sequence, 101 residues long: ATP-dependent Clp protease adapter protein ClpS 2 (101 aa).

It belongs to the ClpS family. As to quaternary structure, binds to the N-terminal domain of the chaperone ClpA.

In terms of biological role, involved in the modulation of the specificity of the ClpAP-mediated ATP-dependent protein degradation. This Mesorhizobium japonicum (strain LMG 29417 / CECT 9101 / MAFF 303099) (Mesorhizobium loti (strain MAFF 303099)) protein is ATP-dependent Clp protease adapter protein ClpS 2.